The chain runs to 63 residues: Large ribosomal subunit protein bL32 (63 aa).

Over residues 1–18 (MAHPKRRISRSRRDKRRA) the composition is skewed to basic residues. Positions 1 to 27 (MAHPKRRISRSRRDKRRAQYNAKTKAP) are disordered.

Belongs to the bacterial ribosomal protein bL32 family.

This is Large ribosomal subunit protein bL32 from Chloroherpeton thalassium (strain ATCC 35110 / GB-78).